Here is a 497-residue protein sequence, read N- to C-terminus: Glutamyl-tRNA(Gln) amidotransferase subunit A (497 aa).

Residues Lys-91 and Ser-166 each act as charge relay system in the active site. The segment at 143–171 (SSTENSAYGPTHNPWDLERTAGGSGGGSS) is disordered. The Acyl-ester intermediate role is filled by Ser-190.

Belongs to the amidase family. GatA subfamily. As to quaternary structure, heterotrimer of A, B and C subunits.

It catalyses the reaction L-glutamyl-tRNA(Gln) + L-glutamine + ATP + H2O = L-glutaminyl-tRNA(Gln) + L-glutamate + ADP + phosphate + H(+). Functionally, allows the formation of correctly charged Gln-tRNA(Gln) through the transamidation of misacylated Glu-tRNA(Gln) in organisms which lack glutaminyl-tRNA synthetase. The reaction takes place in the presence of glutamine and ATP through an activated gamma-phospho-Glu-tRNA(Gln). The polypeptide is Glutamyl-tRNA(Gln) amidotransferase subunit A (Corynebacterium glutamicum (strain ATCC 13032 / DSM 20300 / JCM 1318 / BCRC 11384 / CCUG 27702 / LMG 3730 / NBRC 12168 / NCIMB 10025 / NRRL B-2784 / 534)).